The primary structure comprises 193 residues: Cryptic protein (193 aa).

An N-terminal signal peptide occupies residues 1–25 (MFWRKHVRILFTVTLIWQAIHLGKG). N-linked (GlcNAc...) asparagine glycosylation is found at asparagine 38 and asparagine 60. 2 disulfide bridges follow: cysteine 91–cysteine 103 and cysteine 105–cysteine 114. In terms of domain architecture, EGF-like spans 91 to 115 (CQNGGTCILGAFCACPKHFSGRHCE).

Belongs to the EGF-CFC (Cripto-1/FRL1/Cryptic) family.

It localises to the cell membrane. Its subcellular location is the secreted. Its function is as follows. May play a role in mesoderm and/or neural patterning during gastrulation. The chain is Cryptic protein (CFC1) from Gallus gallus (Chicken).